The following is a 182-amino-acid chain: Large ribosomal subunit protein bL17m (182 aa).

This sequence belongs to the bacterial ribosomal protein bL17 family.

Its subcellular location is the mitochondrion. This chain is Large ribosomal subunit protein bL17m (mrpl17), found in Dictyostelium discoideum (Social amoeba).